Consider the following 164-residue polypeptide: Endoribonuclease YbeY (164 aa).

Residues His-111, His-115, and His-121 each coordinate Zn(2+). Positions Glu-140 to Glu-164 are disordered. The span at His-155–Glu-164 shows a compositional bias: polar residues.

This sequence belongs to the endoribonuclease YbeY family. Zn(2+) is required as a cofactor.

Its subcellular location is the cytoplasm. Single strand-specific metallo-endoribonuclease involved in late-stage 70S ribosome quality control and in maturation of the 3' terminus of the 16S rRNA. The chain is Endoribonuclease YbeY from Pseudomonas fluorescens (strain SBW25).